Reading from the N-terminus, the 487-residue chain is MNGTLDHPDQPDLDAIKMFVGQVPRTWSEKDLRELFEQYGAVYEINILRDRSQNPPQSKGCCFVTFYTRKAALEAQNALHNMKVLPGMHHPIQMKPADSEKNNAVEDRKLFIGMISKKCTENDIRVMFSSFGQIEECRILRGPDGLSRGCAFVTFTTRTMAQTAIKAMHQAQTMEGCSSPMVVKFADTQKDKEQKRMAQQLQQQMQQISAASVWGNLAGLNTLGPQYLALYLQLLQQTANSGNLNTLSSLHPMGGLNAMQLQNLAALAAAASAAQNTPSGTNALTTSSSPLSVLTSSAGSSPSSSSSNSVNPIASLGALQTLAGATAGLNVGSLAGMAALNGGLGSSGLSNGTGSTMEALTQAYSGIQQYAAAALPTLYNQNLLTQQSIGAAGSQKEGPEGANLFIYHLPQEFGDQDLLQMFMPFGNVVSAKVFIDKQTNLSKCFGFVSYDNPVSAQAAIQSMNGFQIGMKRLKVQLKRSKNDSKPY.

Met1 is modified (N-acetylmethionine). Thr4 bears the Phosphothreonine mark. RRM domains follow at residues 16-99 and 108-188; these read IKMF…PADS and RKLF…FADT. A Glycyl lysine isopeptide (Lys-Gly) (interchain with G-Cter in SUMO2) cross-link involves residue Lys109. Phosphoserine is present on residues Ser179 and Ser303. A disordered region spans residues 277–310; it reads TPSGTNALTTSSSPLSVLTSSAGSSPSSSSSNSV. The span at 283 to 310 shows a compositional bias: low complexity; that stretch reads ALTTSSSPLSVLTSSAGSSPSSSSSNSV. The RRM 3 domain maps to 402–480; that stretch reads ANLFIYHLPQ…KRLKVQLKRS (79 aa).

The protein belongs to the CELF/BRUNOL family. As to quaternary structure, interacts with HNRNPH1; the interaction in RNA-dependent. Interacts with PARN. Component of an EIF2 complex at least composed of CELF1/CUGBP1, CALR, CALR3, EIF2S1, EIF2S2, HSP90B1 and HSPA5. Associates with polysomes.

Its subcellular location is the nucleus. The protein localises to the cytoplasm. RNA-binding protein implicated in the regulation of several post-transcriptional events. Involved in pre-mRNA alternative splicing, mRNA translation and stability. Mediates exon inclusion and/or exclusion in pre-mRNA that are subject to tissue-specific and developmentally regulated alternative splicing. Specifically activates exon 5 inclusion of cardiac isoforms of TNNT2 during heart remodeling at the juvenile to adult transition. Acts both as an activator and as a repressor of a pair of coregulated exons: promotes inclusion of the smooth muscle (SM) exon but exclusion of the non-muscle (NM) exon in actinin pre-mRNAs. Activates SM exon 5 inclusion by antagonizing the repressive effect of PTB. Promotes exclusion of exon 11 of the INSR pre-mRNA. Inhibits, together with HNRNPH1, insulin receptor (IR) pre-mRNA exon 11 inclusion in myoblast. Increases translation and controls the choice of translation initiation codon of CEBPB mRNA. Increases mRNA translation of CEBPB in aging liver. Increases translation of CDKN1A mRNA by antagonizing the repressive effect of CALR3. Mediates rapid cytoplasmic mRNA deadenylation. Recruits the deadenylase PARN to the poly(A) tail of EDEN-containing mRNAs to promote their deadenylation. Required for completion of spermatogenesis. Binds to (CUG)n triplet repeats in the 3'-UTR of transcripts such as DMPK and to Bruno response elements (BREs). Binds to muscle-specific splicing enhancer (MSE) intronic sites flanking the alternative exon 5 of TNNT2 pre-mRNA. Binds to AU-rich sequences (AREs or EDEN-like) localized in the 3'-UTR of JUN and FOS mRNAs. Binds to the IR RNA. Binds to the 5'-region of CDKN1A and CEBPB mRNAs. Binds with the 5'-region of CEBPB mRNA in aging liver. May be a specific regulator of miRNA biogenesis. Binds to primary microRNA pri-MIR140 and, with CELF2, negatively regulates the processing to mature miRNA. This is CUGBP Elav-like family member 1 (Celf1) from Rattus norvegicus (Rat).